A 350-amino-acid polypeptide reads, in one-letter code: Membrane progestin receptor alpha (350 aa).

Residues 1–80 lie on the Cytoplasmic side of the membrane; sequence MATMVAQKLS…HNEAVNVWTH (80 aa). A helical membrane pass occupies residues 81 to 101; sequence LLAALVLLLRLAIFVGTVDFW. Residues 102 to 105 are Extracellular-facing; it reads GDPH. Residues 106–126 traverse the membrane as a helical segment; sequence ALPLFIIVLASFTYLSLSALA. At 127–139 the chain is on the cytoplasmic side; sequence HLLQAKSEFWHYS. A helical membrane pass occupies residues 140 to 160; it reads FFFLDYVGVAVYQFGSALAHF. Residues 161–165 are Extracellular-facing; the sequence is YYAIE. Residues 166–186 traverse the membrane as a helical segment; the sequence is PAWHAQVQTIFLPMAAFLAWL. Residues 187 to 239 lie on the Cytoplasmic side of the membrane; it reads SCTGSCYNKYIQKPGLLGRTCQEVPSALAYALDISPVAHRILASPEPATDDPA. Residues 240–260 traverse the membrane as a helical segment; that stretch reads LLYHKCQVVFFLLAAAFFSAF. Over 261–278 the chain is Extracellular; the sequence is MPERWFPGSCHIFGQGHQ. The chain crosses the membrane as a helical span at residues 279–299; sequence LFHVFLVLCTLAQLEAVALDY. Residues 300–318 lie on the Cytoplasmic side of the membrane; that stretch reads EARRPIYEPLHTRWPHNFS. Residues 319 to 339 form a helical membrane-spanning segment; that stretch reads GLFLLTVGSSILTAFLLSQLV. Residues 340 to 350 lie on the Extracellular side of the membrane; that stretch reads RRKLDLDRKTQ.

This sequence belongs to the ADIPOR family.

It localises to the cell membrane. Its function is as follows. Plasma membrane progesterone (P4) receptor coupled to G proteins. Seems to act through a G(i) mediated pathway. May be involved in oocyte maturation. Involved in neurosteroid inhibition of apoptosis. Also binds dehydroepiandrosterone (DHEA), pregnanolone, pregnenolone and allopregnanolone. The protein is Membrane progestin receptor alpha (PAQR7) of Sus scrofa (Pig).